The chain runs to 830 residues: AdoMet-dependent rRNA methyltransferase SPB1 (830 aa).

S-adenosyl-L-methionine is bound by residues glycine 58, tryptophan 60, aspartate 78, aspartate 94, and aspartate 119. The active-site Proton acceptor is the lysine 159. A coiled-coil region spans residues 345 to 388 (LTEEEQIEKELQEMQQKQNLKKKREKRKQNEIKQKEITRMQMQM). Disordered regions lie at residues 485–529 (AKEA…SDSD) and 565–642 (EADL…AREV). Composition is skewed to acidic residues over residues 516–529 (VDDD…SDSD), 591–610 (VSEE…DSDF), and 618–630 (DESD…EDEA). Residues 631 to 642 (ERSQKEKHAREV) are compositionally biased toward basic and acidic residues.

This sequence belongs to the class I-like SAM-binding methyltransferase superfamily. RNA methyltransferase RlmE family. SPB1 subfamily. In terms of assembly, component of the nucleolar and nucleoplasmic pre-60S ribosomal particle.

It is found in the nucleus. The protein resides in the nucleolus. It catalyses the reaction a ribonucleotide in rRNA + S-adenosyl-L-methionine = a 2'-O-methylribonucleotide in rRNA + S-adenosyl-L-homocysteine + H(+). In terms of biological role, required for proper assembly of pre-ribosomal particles during the biogenesis of the 60S ribosomal subunit. The sequence is that of AdoMet-dependent rRNA methyltransferase SPB1 from Eremothecium gossypii (strain ATCC 10895 / CBS 109.51 / FGSC 9923 / NRRL Y-1056) (Yeast).